The following is a 35-amino-acid chain: Alpha-amanitin proprotein 2 (35 aa).

The propeptide occupies 1–10 (MFDTNSTRLP). Residue Ile11 is modified to (3R,4R)-4,5-dihydroxyisoleucine; in form alpha-amanitin. Ile11 carries the (3R,4S)-4-hydroxyisoleucine; in form gamma-amanitin modification. Positions 11 to 18 (IWGIGCNP) form a cross-link, cyclopeptide (Ile-Pro). Positions 12-16 (WGIGC) form a cross-link, 2'-cysteinyl-6'-hydroxytryptophan sulfoxide (Trp-Cys). At Pro18 the chain carries 4-hydroxyproline. A propeptide spanning residues 19–35 (WTAEHVDQTLVSGNDIC) is cleaved from the precursor.

This sequence belongs to the MSDIN fungal toxin family. Post-translationally, processed by the macrocyclase-peptidase enzyme POPB to yield a toxic bicyclic octapeptide. POPB first removes 10 residues from the N-terminus. Conformational trapping of the remaining peptide forces the enzyme to release this intermediate rather than proceed to macrocyclization. The enzyme rebinds the remaining peptide in a different conformation and catalyzes macrocyclization of the N-terminal 8 residues.

In terms of biological role, major toxin belonging to the bicyclic octapeptides amatoxins that acts by binding non-competitively to RNA polymerase II and greatly slowing the elongation of transcripts from target promoters. This chain is Alpha-amanitin proprotein 2, found in Galerina marginata (strain CBS 339.88).